A 59-amino-acid polypeptide reads, in one-letter code: Large ribosomal subunit protein bL32 (59 aa).

The disordered stretch occupies residues 1-34 (MAVQKSKVTRSRRGQRRSHDALTGPTLSVDKTTG). Residues 7–16 (KVTRSRRGQR) are compositionally biased toward basic residues.

The protein belongs to the bacterial ribosomal protein bL32 family.

The sequence is that of Large ribosomal subunit protein bL32 from Marinomonas sp. (strain MWYL1).